The following is a 146-amino-acid chain: VHLTDAEKALVTGLWGKVKPDELGGEALGRLLVGYPWTQRFFDSFGDLSSASALMGNPKVKAHGKKVLDSFSEGLKHLDNLKGTFASLSELHCDKLHVDPENFKLLGNMLVLVLAHLLGKDFTPAAQAAYQKVVAGVATALAHKYH.

Val1 carries the N-acetylvaline modification. One can recognise a Globin domain in the interval 2-146 (HLTDAEKALV…VATALAHKYH (145 aa)). Thr12 bears the Phosphothreonine mark. The residue at position 44 (Ser44) is a Phosphoserine. At Lys59 the chain carries N6-acetyllysine. His63 is a binding site for heme b. N6-acetyllysine is present on Lys82. His92 serves as a coordination point for heme b. The residue at position 93 (Cys93) is an S-nitrosocysteine. Position 144 is an N6-acetyllysine (Lys144).

The protein belongs to the globin family. As to quaternary structure, heterotetramer of two alpha chains and two beta chains. Red blood cells.

Involved in oxygen transport from the lung to the various peripheral tissues. The protein is Hemoglobin subunit beta of Peromyscus californicus (California mouse).